The following is a 130-amino-acid chain: Small ribosomal subunit protein uS11c (130 aa).

The protein belongs to the universal ribosomal protein uS11 family. Part of the 30S ribosomal subunit.

Its subcellular location is the plastid. It localises to the chloroplast. The protein is Small ribosomal subunit protein uS11c of Porphyra purpurea (Red seaweed).